The primary structure comprises 84 residues: Small ribosomal subunit protein uS17 (84 aa).

This sequence belongs to the universal ribosomal protein uS17 family. Part of the 30S ribosomal subunit.

Its function is as follows. One of the primary rRNA binding proteins, it binds specifically to the 5'-end of 16S ribosomal RNA. The polypeptide is Small ribosomal subunit protein uS17 (Borrelia recurrentis (strain A1)).